We begin with the raw amino-acid sequence, 579 residues long: Putative ABC transporter ATP-binding protein VPA1482 (579 aa).

2 ABC transporter domains span residues 3–244 and 299–533; these read IEFS…GIRE and LEVR…ANLT. ATP is bound by residues 37-44 and 332-339; these read GPSGSGKS and GKNGSGKS.

The protein belongs to the ABC transporter superfamily.

It localises to the cell inner membrane. Functionally, probably part of an ABC transporter complex. Responsible for energy coupling to the transport system. The polypeptide is Putative ABC transporter ATP-binding protein VPA1482 (Vibrio parahaemolyticus serotype O3:K6 (strain RIMD 2210633)).